The primary structure comprises 4456 residues: Dynein axonemal heavy chain 2 (4456 aa).

Positions 1-12 (MASKAEKKRKVA) are enriched in basic residues. The tract at residues 1-55 (MASKAEKKRKVAGRGGARAGRVVRAPQSTAGPGATEASLLPDGQEPEPESGKEDS) is disordered. The segment at 1–1795 (MASKAEKKRK…RQTNTQFQYG (1795 aa)) is stem. A coiled-coil region spans residues 1218 to 1274 (LDQIAQMRAMLMAMRDEENNLRSNLGIFKIEQPVSKDLQILEKELDALQQVWEITRD). The stretch at 1439–1474 (EDNQVALSTMKASRFVKAFEKDVDHWERCLSLILEV) is one TPR 1 repeat. 4 AAA regions span residues 1794–2015 (YGYE…LLRY), 2075–2302 (DTIE…DNCN), 2407–2654 (RYPP…VFQG), and 2751–3003 (EYNL…LRRY). Residues 1832-1839 (GPAGTGKT), 2113-2120 (GGTGSSKT), and 2445-2452 (GPVGTGKT) each bind ATP. The stretch at 2750-2783 (NEYNLSPSVVPMQLVLFREAIEHITRIVRVIGQP) is one TPR 2 repeat. 2791–2798 (GIGGSGRQ) contacts ATP. A stalk region spans residues 3018 to 3301 (YKKLLGEKRQ…EELRKKSEEM (284 aa)). Residues 3041 to 3078 (FKIDETREKVEVMSLELEDAKKKVAEFQKQCEEYLVII) adopt a coiled-coil conformation. Residues 3101-3134 (IEEVKCQALADNAQKDLEEALPALEEAMRALESL) form a TPR 3 repeat. Coiled-coil stretches lie at residues 3245–3333 (KRIR…EEDL) and 3552–3596 (VRKE…GSLL). AAA regions lie at residues 3387–3617 (LTNP…EVTE) and 3833–4052 (VTSF…LLSL). TPR repeat units lie at residues 4101 to 4134 (TTPF…LPSM) and 4135 to 4169 (DPPE…QPQI).

It belongs to the dynein heavy chain family. Part of the axonemal inner dynein arm complex that consists of at least two heavy chains and a number of intermediate and light chains. Interacts with DNAI4.

It localises to the cytoplasm. It is found in the cytoskeleton. The protein localises to the cilium axoneme. Its subcellular location is the flagellum axoneme. Its function is as follows. As part of the axonemal inner dynein arm complex plays a central role in ciliary beat. Expressed in sperm flagellum, it is required for sperm motility. Dyneins are microtubule-based molecular motors possessing ATPase activities that can convert the chemical energy of ATP into relative sliding between adjacent microtubule doublets to generate ciliary bending. This chain is Dynein axonemal heavy chain 2, found in Mus musculus (Mouse).